Reading from the N-terminus, the 343-residue chain is Uroporphyrinogen decarboxylase (343 aa).

Residues 24 to 28 (RQAGR), Phe-43, Asp-74, Tyr-151, Ser-206, and His-321 each bind substrate.

It belongs to the uroporphyrinogen decarboxylase family. As to quaternary structure, homodimer.

The protein resides in the cytoplasm. The enzyme catalyses uroporphyrinogen III + 4 H(+) = coproporphyrinogen III + 4 CO2. The protein operates within porphyrin-containing compound metabolism; protoporphyrin-IX biosynthesis; coproporphyrinogen-III from 5-aminolevulinate: step 4/4. Catalyzes the decarboxylation of four acetate groups of uroporphyrinogen-III to yield coproporphyrinogen-III. This is Uroporphyrinogen decarboxylase from Thermosynechococcus vestitus (strain NIES-2133 / IAM M-273 / BP-1).